The following is an 870-amino-acid chain: Leucine--tRNA ligase (870 aa).

A 'HIGH' region motif is present at residues 36 to 46 (PYPSGKIHLGH). A 'KMSKS' region motif is present at residues 602–606 (KMSKS). Lysine 605 provides a ligand contact to ATP.

Belongs to the class-I aminoacyl-tRNA synthetase family.

The protein resides in the cytoplasm. The catalysed reaction is tRNA(Leu) + L-leucine + ATP = L-leucyl-tRNA(Leu) + AMP + diphosphate. This Rickettsia akari (strain Hartford) protein is Leucine--tRNA ligase.